The sequence spans 153 residues: Aspartate carbamoyltransferase regulatory chain (153 aa).

Zn(2+)-binding residues include cysteine 109, cysteine 114, cysteine 138, and cysteine 141.

Belongs to the PyrI family. Contains catalytic and regulatory chains. Requires Zn(2+) as cofactor.

In terms of biological role, involved in allosteric regulation of aspartate carbamoyltransferase. The chain is Aspartate carbamoyltransferase regulatory chain from Escherichia coli O7:K1 (strain IAI39 / ExPEC).